Here is a 280-residue protein sequence, read N- to C-terminus: Nuclear egress protein 1 (280 aa).

The segment at 86 to 203 (CLTLSPYGHS…YIIFTSLTLH (118 aa)) adopts a CCCH-type zinc-finger fold.

The protein belongs to the herpesviridae NEC1 protein family. In terms of assembly, forms a heterohexameric complex with NEC2. Interacts with capsid vertex specific component 2/CVC2; this interaction directs the capsid to the host inner nuclear membrane to initiate budding. In terms of processing, phosphorylated at serine residues in the N-terminus. This phosphorylation regulates the localization within the inner nuclear membrane.

It is found in the host nucleus inner membrane. Functionally, plays an essential role in virion nuclear egress, the first step of virion release from infected cell. Within the host nucleus, NEC1 interacts with the newly formed capsid through the vertexes and directs it to the inner nuclear membrane by associating with NEC2. Induces the budding of the capsid at the inner nuclear membrane as well as its envelopment into the perinuclear space. There, the NEC1/NEC2 complex promotes the fusion of the enveloped capsid with the outer nuclear membrane and the subsequent release of the viral capsid into the cytoplasm where it will reach the secondary budding sites in the host Golgi or trans-Golgi network. The polypeptide is Nuclear egress protein 1 (Alcelaphine herpesvirus 1 (strain C500) (AlHV-1)).